The primary structure comprises 329 residues: Zygote arrest protein 1 (329 aa).

2 disordered regions span residues L106 to A132 and F146 to K218. Residues E149–E162 are compositionally biased toward acidic residues. Residues S166–V177 are compositionally biased toward basic and acidic residues. Residues K231 to G314 form a 3CxxC-type zinc finger.

It belongs to the ZAR1 family. As to expression, specifically expressed in ovaries but absent in testes.

The protein localises to the cytoplasm. It is found in the cytoplasmic ribonucleoprotein granule. In terms of biological role, mRNA-binding protein required for maternal mRNA storage, translation and degradation during oocyte maturation. Probably promotes formation of some phase-separated membraneless compartment that stores maternal mRNAs in oocytes: acts by undergoing liquid-liquid phase separation upon binding to maternal mRNAs. Binds to the 3'-UTR of zona pellucida mRNAs, inhibiting their translation. The polypeptide is Zygote arrest protein 1 (Danio rerio (Zebrafish)).